The sequence spans 378 residues: Cysteine endopeptidase RepA (378 aa).

An N-terminal signal peptide occupies residues 1 to 24 (MLRCFLVAAAAVALAAAAAAPARA). Positions 25–141 (IPFTESDLSS…SFRYGGDDED (117 aa)) are cleaved as a propeptide — activation peptide. Cystine bridges form between C164/C206, C198/C239, and C297/C350. C167 is a catalytic residue. Residues H303 and N324 contribute to the active site.

It belongs to the peptidase C1 family.

Its subcellular location is the protein storage vacuole. Cysteine endopeptidase that digests in vitro both the acidic and basic subunits of glutelin, the major seed storage protein of rice. The polypeptide is Cysteine endopeptidase RepA (Oryza sativa subsp. japonica (Rice)).